Reading from the N-terminus, the 117-residue chain is Acylphosphatase (117 aa).

One can recognise an Acylphosphatase-like domain in the interval 31-117; it reads RWRWIIQGQV…RGDDWFEVRY (87 aa). Catalysis depends on residues arginine 46 and asparagine 64.

This sequence belongs to the acylphosphatase family.

It catalyses the reaction an acyl phosphate + H2O = a carboxylate + phosphate + H(+). This chain is Acylphosphatase (acyP), found in Synechococcus sp. (strain CC9902).